Consider the following 29-residue polypeptide: Kalata-B11 (29 aa).

Residues 1 to 29 (GLPVCGETCFGGTCNTPGCSCTDPICTRD) constitute a cross-link (cyclopeptide (Gly-Asp)). 3 disulfides stabilise this stretch: Cys-5–Cys-19, Cys-9–Cys-21, and Cys-14–Cys-26.

This is a cyclic peptide.

Functionally, probably participates in a plant defense mechanism. This is Kalata-B11 from Oldenlandia affinis.